A 712-amino-acid chain; its full sequence is Serrate RNA effector molecule homolog (712 aa).

Disordered stretches follow at residues 1–80 (MVDS…DSIY), 214–256 (ADIK…TEKS), and 620–712 (QRPV…DDIP). Basic and acidic residues-rich tracts occupy residues 8 to 26 (GDRRRDKFARERRDEDYRR) and 34 to 54 (YDNKRPGGRRDDYQVKRSRGD). Polar residues predominate over residues 65–79 (RSGNGSDLPTESDSI). Over residues 214–236 (ADIKKDENGNGTEQPKEEPEVKQ) the composition is skewed to basic and acidic residues. A compositionally biased stretch (acidic residues) spans 240–251 (ATEELEEGAIED). Basic and acidic residues-rich tracts occupy residues 621 to 637 (RPVDCEPKQAPRDDHRG) and 645 to 655 (GYGRERDDDRG). Residues 656–668 (PGGGGRNSFGGGG) show a composition bias toward gly residues.

This sequence belongs to the ARS2 family.

It is found in the nucleus. Functionally, acts as a mediator between the cap-binding complex (CBC) and the primary microRNAs (miRNAs) processing machinery. Contributes to the stability and delivery of capped primary miRNA transcripts to the primary miRNA processing complex, thereby playing a role in RNA-mediated gene silencing (RNAi) by miRNAs. The polypeptide is Serrate RNA effector molecule homolog (Caenorhabditis elegans).